A 600-amino-acid polypeptide reads, in one-letter code: Adenine deaminase (600 aa).

The protein belongs to the metallo-dependent hydrolases superfamily. Adenine deaminase family. Mn(2+) serves as cofactor.

The catalysed reaction is adenine + H2O + H(+) = hypoxanthine + NH4(+). This is Adenine deaminase from Chelativorans sp. (strain BNC1).